A 228-amino-acid polypeptide reads, in one-letter code: Death domain-containing membrane protein NRADD (228 aa).

Over M1 to N52 the chain is Extracellular. 2 N-linked (GlcNAc...) asparagine glycosylation sites follow: N4 and N37. Residues I53 to A73 traverse the membrane as a helical; Signal-anchor for type III membrane protein segment. The Cytoplasmic segment spans residues F74–V228. One can recognise a Death domain in the interval E143–A222.

In terms of assembly, interacts with NTRK1. Isoform 1 and isoform 2 interact with NGFR. Interacts with SORT1. Post-translationally, isoform 1 is N-glycosylated. Isoform 2 is not N-glycosylated. Detected in embryo, including embryonic brain. Detected at very low levels in adult testis, spleen, thymus and lung.

The protein localises to the cell membrane. The protein resides in the nucleus. Its function is as follows. Modulates NTRK1 signaling. Can activate several intracellular signaling pathways, leading to activation of JUN. Promotes translocation of SORT1 to the cell membrane, and thereby hinders lysosomal degradation of SOTR1 and promotes its interaction with NGFR. Both isoform 1 and isoform 2 promote apoptosis. The sequence is that of Death domain-containing membrane protein NRADD (Nradd) from Rattus norvegicus (Rat).